Here is a 293-residue protein sequence, read N- to C-terminus: Ribosomal protein L11 methyltransferase (293 aa).

Residues T145, G166, D188, and N230 each coordinate S-adenosyl-L-methionine.

The protein belongs to the methyltransferase superfamily. PrmA family.

It localises to the cytoplasm. The enzyme catalyses L-lysyl-[protein] + 3 S-adenosyl-L-methionine = N(6),N(6),N(6)-trimethyl-L-lysyl-[protein] + 3 S-adenosyl-L-homocysteine + 3 H(+). In terms of biological role, methylates ribosomal protein L11. The chain is Ribosomal protein L11 methyltransferase from Klebsiella pneumoniae subsp. pneumoniae (strain ATCC 700721 / MGH 78578).